The primary structure comprises 347 residues: NADH-ubiquinone oxidoreductase chain 2 (347 aa).

11 helical membrane passes run proline 3–glycine 23, histidine 25–methionine 45, tyrosine 59–methionine 79, isoleucine 96–proline 116, glycine 127–proline 147, glycine 148–glycine 168, isoleucine 178–proline 198, threonine 201–isoleucine 221, threonine 247–isoleucine 267, isoleucine 276–leucine 296, and leucine 325–isoleucine 345.

It belongs to the complex I subunit 2 family. Core subunit of respiratory chain NADH dehydrogenase (Complex I) which is composed of 45 different subunits. Interacts with TMEM242.

It is found in the mitochondrion inner membrane. It catalyses the reaction a ubiquinone + NADH + 5 H(+)(in) = a ubiquinol + NAD(+) + 4 H(+)(out). In terms of biological role, core subunit of the mitochondrial membrane respiratory chain NADH dehydrogenase (Complex I) which catalyzes electron transfer from NADH through the respiratory chain, using ubiquinone as an electron acceptor. Essential for the catalytic activity and assembly of complex I. This chain is NADH-ubiquinone oxidoreductase chain 2, found in Ozimops beccarii (Beccari's free-tailed bat).